The chain runs to 346 residues: MAFTNKSSYIALGCEGSANKLGIGVILHTPTETKILSNLRDTFVSPPGTGFLPKDTAAHHRAHFVRLAREALAEAKITPADVDCICYTKGPGMGAPLNSVAVAARALSLLWDRPLVGVNHCVGHIEMGRYITGAENPVVLYVSGGNSQVIAYAEQRYRIFGETLDIAVGNCLDRFARTLEISNDPAPGYNIEQLAKKGSKLLDIPYAVKGMDCSFSGILASADALAAQMKAGADFTPEDLCFSLQETVFAMLVEITERAMAHVGSSQVLIVGGVGCNERLQEMMGHMARERGGSVYATDERFCIDNGIMIAHAGLLAYETGFRTSLEESTCTQRFRTDEVFIKWRD.

Residues histidine 120, histidine 124, and tyrosine 141 each contribute to the a divalent metal cation site. Residues tyrosine 141–glycine 145, aspartate 173, glycine 188, glutamate 192, and asparagine 277 contribute to the substrate site. Aspartate 305 contacts a divalent metal cation.

This sequence belongs to the KAE1 / TsaD family. In terms of assembly, component of the EKC/KEOPS complex composed of at least BUD32, CGI121, GON7, KAE1 and PCC1; the whole complex dimerizes. The cofactor is a divalent metal cation.

The protein localises to the cytoplasm. Its subcellular location is the nucleus. It carries out the reaction L-threonylcarbamoyladenylate + adenosine(37) in tRNA = N(6)-L-threonylcarbamoyladenosine(37) in tRNA + AMP + H(+). Its function is as follows. Component of the EKC/KEOPS complex that is required for the formation of a threonylcarbamoyl group on adenosine at position 37 (t(6)A37) in tRNAs that read codons beginning with adenine. The complex is probably involved in the transfer of the threonylcarbamoyl moiety of threonylcarbamoyl-AMP (TC-AMP) to the N6 group of A37. KAE1 likely plays a direct catalytic role in this reaction, but requires other protein(s) of the complex to fulfill this activity. The EKC/KEOPS complex also promotes both telomere uncapping and telomere elongation. The complex is required for efficient recruitment of transcriptional coactivators. This Gibberella zeae (strain ATCC MYA-4620 / CBS 123657 / FGSC 9075 / NRRL 31084 / PH-1) (Wheat head blight fungus) protein is tRNA N6-adenosine threonylcarbamoyltransferase.